The sequence spans 156 residues: Ribosome-binding factor A (156 aa).

The span at 125-138 (RVREGAKHAGDPDP) shows a compositional bias: basic and acidic residues. The tract at residues 125–156 (RVREGAKHAGDPDPYRVGGAEDTDGDTDGDER) is disordered. Acidic residues predominate over residues 145-156 (EDTDGDTDGDER).

The protein belongs to the RbfA family. As to quaternary structure, monomer. Binds 30S ribosomal subunits, but not 50S ribosomal subunits or 70S ribosomes.

The protein resides in the cytoplasm. One of several proteins that assist in the late maturation steps of the functional core of the 30S ribosomal subunit. Associates with free 30S ribosomal subunits (but not with 30S subunits that are part of 70S ribosomes or polysomes). Required for efficient processing of 16S rRNA. May interact with the 5'-terminal helix region of 16S rRNA. This Mycolicibacterium smegmatis (strain ATCC 700084 / mc(2)155) (Mycobacterium smegmatis) protein is Ribosome-binding factor A.